We begin with the raw amino-acid sequence, 92 residues long: MSGITRHSQPSLRAGVRLQHDRARDQWVLLAPERVVELDDIALVVAQRYDGTRSLAQIAQELAAEFDADAAQIEADVIELTDTLHQKRLLRL.

The protein belongs to the PqqD family. In terms of assembly, monomer. Interacts with PqqE.

It participates in cofactor biosynthesis; pyrroloquinoline quinone biosynthesis. Its function is as follows. Functions as a PqqA binding protein and presents PqqA to PqqE, in the pyrroloquinoline quinone (PQQ) biosynthetic pathway. The chain is PqqA binding protein from Xanthomonas euvesicatoria pv. vesicatoria (strain 85-10) (Xanthomonas campestris pv. vesicatoria).